The chain runs to 102 residues: PE family immunomodulator PE15 (102 aa).

In terms of domain architecture, PE spans 3–91; the sequence is LRVVPESLAG…SGASYAARDA (89 aa).

The protein belongs to the mycobacterial PE family.

Its subcellular location is the secreted. It is found in the cell envelope. It localises to the cell surface. In terms of biological role, may play a pivotal role in the evasion of host immune response by M.tuberculosis. Mediates production of IL-10 via activation of the p38 and ERK1/2 mitogen-activated protein kinase (MAPK) signaling pathways. This Mycobacterium tuberculosis (strain CDC 1551 / Oshkosh) protein is PE family immunomodulator PE15 (PE15).